We begin with the raw amino-acid sequence, 218 residues long: Radial spoke head 1 homolog (218 aa).

Acidic residues predominate over residues 1–13; sequence MSDAGTEEFDEEQ. Residues 1-48 form a disordered region; sequence MSDAGTEEFDEEQGSLGEYEGDRNEAGERHGQGKAVLPRGDTYQGAYE. MORN repeat units lie at residues 19–42, 43–65, 66–88, 89–111, 112–134, and 158–180; these read YEGD…RGDT, YQGA…NGAR, YTGE…DGSK, YEGS…NGDT, YDGE…ETGS, and YHGN…IGCE. The span at 20–31 shows a compositional bias: basic and acidic residues; that stretch reads EGDRNEAGERHG.

Component of the axonemal radial spoke complexes. Interacts with septin SEPT7. Testis-specific.

The protein localises to the cytoplasm. Its subcellular location is the cytoskeleton. The protein resides in the cilium axoneme. It localises to the flagellum basal body. It is found in the flagellum axoneme. In terms of biological role, functions as part of axonemal radial spoke complexes that play an important part in the motility of sperm and cilia. This Cyprinus carpio (Common carp) protein is Radial spoke head 1 homolog (rsph1).